The primary structure comprises 142 residues: Large ribosomal subunit protein uL13 (142 aa).

This sequence belongs to the universal ribosomal protein uL13 family. As to quaternary structure, part of the 50S ribosomal subunit.

Functionally, this protein is one of the early assembly proteins of the 50S ribosomal subunit, although it is not seen to bind rRNA by itself. It is important during the early stages of 50S assembly. This chain is Large ribosomal subunit protein uL13, found in Shigella boydii serotype 18 (strain CDC 3083-94 / BS512).